A 701-amino-acid chain; its full sequence is DNA ligase 2 (701 aa).

Residues 1 to 10 (MSPAPQNRQP) show a composition bias toward polar residues. Positions 1-21 (MSPAPQNRQPSGVPVGGQFAA) are disordered. NAD(+) contacts are provided by residues 64–68 (DAEFD), 111–112 (SL), and glutamate 133. Residue lysine 135 is the N6-AMP-lysine intermediate of the active site. Residues arginine 156, glutamate 189, lysine 302, and lysine 326 each coordinate NAD(+). Residues cysteine 420, cysteine 423, cysteine 436, and cysteine 441 each contribute to the Zn(2+) site. The segment covering 603 to 613 (KAAPAAGAKAP) has biased composition (low complexity). Positions 603–623 (KAAPAAGAKAPKLTKPDGKPM) are disordered. In terms of domain architecture, BRCT spans 615-701 (LTKPDGKPMN…FAQMVEDGEV (87 aa)).

This sequence belongs to the NAD-dependent DNA ligase family. LigA subfamily. It depends on Mg(2+) as a cofactor. Requires Mn(2+) as cofactor.

It catalyses the reaction NAD(+) + (deoxyribonucleotide)n-3'-hydroxyl + 5'-phospho-(deoxyribonucleotide)m = (deoxyribonucleotide)n+m + AMP + beta-nicotinamide D-nucleotide.. DNA ligase that catalyzes the formation of phosphodiester linkages between 5'-phosphoryl and 3'-hydroxyl groups in double-stranded DNA using NAD as a coenzyme and as the energy source for the reaction. It is essential for DNA replication and repair of damaged DNA. The protein is DNA ligase 2 of Pseudarthrobacter chlorophenolicus (strain ATCC 700700 / DSM 12829 / CIP 107037 / JCM 12360 / KCTC 9906 / NCIMB 13794 / A6) (Arthrobacter chlorophenolicus).